A 320-amino-acid chain; its full sequence is Cytochrome f (320 aa).

An N-terminal signal peptide occupies residues 1–35; the sequence is MEKRNTYDWVTRWVIASFSILTISYMITWTSISNA. Residues Y36, C56, C59, and H60 each contribute to the heme site. The helical transmembrane segment at 286-306 threads the bilayer; the sequence is IQGLLVFLASVVLAQIFLVLK.

The protein belongs to the cytochrome f family. The 4 large subunits of the cytochrome b6-f complex are cytochrome b6, subunit IV (17 kDa polypeptide, petD), cytochrome f and the Rieske protein, while the 4 small subunits are PetG, PetL, PetM and PetN. The complex functions as a dimer. It depends on heme as a cofactor.

The protein resides in the plastid. It localises to the chloroplast thylakoid membrane. Functionally, component of the cytochrome b6-f complex, which mediates electron transfer between photosystem II (PSII) and photosystem I (PSI), cyclic electron flow around PSI, and state transitions. This Welwitschia mirabilis (Tree tumbo) protein is Cytochrome f.